The sequence spans 189 residues: MKVADMQDQLVCHGCRNLLMYPRGASNVRCALCNTINMVPPPPPPHDMAHIICGGCRTMLMYTRGASSVRCSCCQTTNLVPAHSNQVAHAPSSQVAQINCGHCRTTLMYPYGASSVKCAVCQFVTNVNMSNGRVPLPTNRPNGTACPPSTSTSTPPSQTQTVVVENPMSVDESGKLVSNVVVGVTTDKK.

LSD1-type zinc-finger stretches follow at residues 9-39, 50-80, and 97-127; these read QLVC…INMV, HIIC…TNLV, and QINC…VTNV. The segment at 136–159 is disordered; that stretch reads LPTNRPNGTACPPSTSTSTPPSQT. Residues 147–159 show a composition bias toward low complexity; the sequence is PPSTSTSTPPSQT.

In terms of assembly, interacts with BZIP10 and AMC1 (via N-terminus). Binds to BZIP63. Interacts with CAT1, CAT2 and CAT3 in a zinc-finger-dependent manner. Interacts (via N-terminus) with GILP. As to expression, expressed in cotyledons, roots, rosette leaves, stems, inflorescences and flowers.

It is found in the cytoplasm. It localises to the nucleus. In terms of biological role, negative regulator of reactive oxygen-induced cell death, cold stress-induced cell death, pathogen-induced hypersensitive response (HR), basal disease resistance. May be involved in the induction of the copper/zinc superoxide dismutase CSD1 and CSD2 that detoxify accumulating superoxide before the reactive oxygen species (ROS) can trigger a cell death cascade. LSD1 and LOL1 have antagonistic effects on CSD1 and CSD2 accumulation to regulate oxidative stress-induced cell death. Antagonizes the function of BZIP10, a positive regulator of cell death, by interacting in the cytoplasm and preventing its nuclear localization. Controls lysigenous aerenchyma in hypocotyls under root hypoxia. Required for leaf acclimation in response to excess excitation energy. The protein is Protein LSD1 (LSD1) of Arabidopsis thaliana (Mouse-ear cress).